Reading from the N-terminus, the 614-residue chain is High-affinity choline transporter 1 (614 aa).

The chain crosses the membrane as a helical span at residues 6–26 (GVVSIVLFYLLILVVGIWAGR). Topologically, residues 27–44 (KKQSGNDSEEEVMLAGRS) are cytoplasmic. Residues 45-65 (IGLFVGIFTMTATWVGGGYIN) form a helical membrane-spanning segment. Topologically, residues 66–75 (GTAEAIYTSG) are extracellular. The helical transmembrane segment at 76 to 96 (LVWCQAPFGYALSLVFGGIFF) threads the bilayer. Residues 97 to 119 (ANPMRKQGYITMLDPLQDSFGER) are Cytoplasmic-facing. A helical membrane pass occupies residues 120–140 (MGGLLFLPALCGEVFWAAGIL). Residues 141–158 (AALGATLSVIIDMDHRTS) are Extracellular-facing. The chain crosses the membrane as a helical span at residues 159–179 (VILSSCIAIFYTLFGGLYSVA). Residues 180 to 185 (YTDVIQ) lie on the Cytoplasmic side of the membrane. Residues 186-206 (LFCIFIGLWMCIPFAWSNEHV) form a helical membrane-spanning segment. Residues 207–225 (GSLSDLEVDWIGHVEPKKH) lie on the Extracellular side of the membrane. Residues 226 to 246 (WLYIDYGLLLVFGGIPWQVYF) traverse the membrane as a helical segment. The Cytoplasmic portion of the chain corresponds to 247 to 262 (QRVLSSKTAGRAQLLS). A helical transmembrane segment spans residues 263–283 (YVAAAGCILMAIPPVLIGAIA). At 284–305 (KATPWNETDYKGPYPLTVDETS) the chain is on the extracellular side. N-linked (GlcNAc...) asparagine glycosylation occurs at Asn289. The helical transmembrane segment at 306–326 (MILPMVLQYLTPDFVSFFGLG) threads the bilayer. Residues 327–364 (AVSAAVMSSADSSVLSAASMFARNVYKLIFRQKASEME) are Cytoplasmic-facing. A helical membrane pass occupies residues 365–385 (IIWVMRVAIIVVGILATIMAL). Residues 386-394 (TIPSIYGLW) are Extracellular-facing. The chain crosses the membrane as a helical span at residues 395–415 (SMCSDLVYVILFPQLLMVVHF). Residues 416 to 424 (KKHCNTYGS) lie on the Cytoplasmic side of the membrane. Residues 425–445 (LSAYIVALAIRLSGGEAILGL) traverse the membrane as a helical segment. At 446-467 (APLIKYPGYDEETKEQMFPFRT) the chain is on the extracellular side. A helical transmembrane segment spans residues 468–488 (MAMLLSLVTLISVSWWTKMMF). Topologically, residues 489–614 (ESGKLPPSYD…PTAEQDNTAF (126 aa)) are cytoplasmic. The interval 583-614 (ATGVKPSGGGGGHLQSQSGMAMPTAEQDNTAF) is disordered.

This sequence belongs to the sodium:solute symporter (SSF) (TC 2.A.21) family.

It is found in the membrane. Functionally, imports choline from the extracellular space to the neuron with high affinity. Rate-limiting step in acetylcholine synthesis. Sodium ion and chloride ion dependent. This is High-affinity choline transporter 1 from Drosophila melanogaster (Fruit fly).